The primary structure comprises 211 residues: Probable endo-1,4-beta-xylanase 5 (211 aa).

The signal sequence occupies residues 1 to 16; that stretch reads MKVTAAFASLLLTAFA. Residues 19–210 form the GH11 domain; the sequence is APEPVLVSRS…GAGSASVTIS (192 aa). The Nucleophile role is filled by Glu106. Residue Glu197 is the Proton donor of the active site.

It belongs to the glycosyl hydrolase 11 (cellulase G) family.

Its subcellular location is the secreted. The catalysed reaction is Endohydrolysis of (1-&gt;4)-beta-D-xylosidic linkages in xylans.. It participates in glycan degradation; xylan degradation. Endo-1,4-beta-xylanase involved in the hydrolysis of xylan, a major structural heterogeneous polysaccharide found in plant biomass representing the second most abundant polysaccharide in the biosphere, after cellulose. This chain is Probable endo-1,4-beta-xylanase 5 (XYN5), found in Aspergillus niger (strain ATCC MYA-4892 / CBS 513.88 / FGSC A1513).